The following is a 606-amino-acid chain: MVQEHTESFWGGIIKSMGLVFGDIGTSPIYTLTVIMTLTKPDAEHVLGILSLIVWTLIILVSVEYAWLAMSLGRKGEGGTIVLKEILVRLLKSGRQVAFVGFLAFMGVSLLLGDGIITPAISILSAVEGMRLIPGWENLAQGVLIFIAAVIALILFIFQFKGTDKVAGAFGPIMVIWFGALTLSGIVSIAGTPEVVSAVSPHHAVTFLMHNGLAGFFILSEVILCATGGEALYADMGHLGRKPIIRAWYFVFSALVINYLGQGAFILRNPNETNILFSMVKSQAPILYIPFLCLTIMATIIASQALISGVFSIVYQGITTRILPLMKVDYTSTHLKSQIYIGSVNWSLLVAVIFIMLIFKKSENLAAAYGLAVTGTMFITGIMMTMIFSHTTKKWKVPIALAVTLIDLVYLTANFHKLPHGGYWSLILASIPLAIMIIWTQGQKALYRALRPLDLDTFLLSFGQIYAKGHNIPGTGLFFVRETAVVPPYVIHCIIRSNIIYERNVFVSLNRSDEPFGVKANLTKGIGPGLDSFEILAGYMELVDIERLLKKKGIEEKVIFYGIEDIATNNPFWRVFSTIKRQTANFVQFNKLPVSKLQGVVTRVEM.

Transmembrane regions (helical) follow at residues 18–38 (GLVFGDIGTSPIYTLTVIMTL), 46–66 (VLGILSLIVWTLIILVSVEYA), 97–117 (VAFVGFLAFMGVSLLLGDGII), 140–160 (AQGVLIFIAAVIALILFIFQF), 169–189 (AFGPIMVIWFGALTLSGIVSI), 204–224 (AVTFLMHNGLAGFFILSEVIL), 247–267 (AWYFVFSALVINYLGQGAFIL), 286–306 (ILYIPFLCLTIMATIIASQAL), 339–359 (IYIGSVNWSLLVAVIFIMLIF), 368–388 (AYGLAVTGTMFITGIMMTMIF), 395–415 (WKVPIALAVTLIDLVYLTANF), and 418–438 (LPHGGYWSLILASIPLAIMII).

Belongs to the HAK/KUP transporter (TC 2.A.72) family.

It is found in the cell inner membrane. It carries out the reaction K(+)(in) + H(+)(in) = K(+)(out) + H(+)(out). Its function is as follows. Transport of potassium into the cell. Likely operates as a K(+):H(+) symporter. This is Probable potassium transport system protein Kup 2 from Geobacter metallireducens (strain ATCC 53774 / DSM 7210 / GS-15).